The primary structure comprises 302 residues: Sulfate adenylyltransferase subunit 2 (302 aa).

This sequence belongs to the PAPS reductase family. CysD subfamily. As to quaternary structure, heterodimer composed of CysD, the smaller subunit, and CysN.

It catalyses the reaction sulfate + ATP + H(+) = adenosine 5'-phosphosulfate + diphosphate. It participates in sulfur metabolism; hydrogen sulfide biosynthesis; sulfite from sulfate: step 1/3. Functionally, with CysN forms the ATP sulfurylase (ATPS) that catalyzes the adenylation of sulfate producing adenosine 5'-phosphosulfate (APS) and diphosphate, the first enzymatic step in sulfur assimilation pathway. APS synthesis involves the formation of a high-energy phosphoric-sulfuric acid anhydride bond driven by GTP hydrolysis by CysN coupled to ATP hydrolysis by CysD. This chain is Sulfate adenylyltransferase subunit 2, found in Salmonella arizonae (strain ATCC BAA-731 / CDC346-86 / RSK2980).